Reading from the N-terminus, the 2318-residue chain is Neurogenic locus notch homolog protein 3 (2318 aa).

Residues 1 to 14 (MGLGARGRRRRRRL) are compositionally biased toward basic residues. The segment at 1-20 (MGLGARGRRRRRRLMALPPP) is disordered. The first 39 residues, 1–39 (MGLGARGRRRRRRLMALPPPPPPMRALPLLLLLAGLGAA), serve as a signal peptide directing secretion. 3 EGF-like domains span residues 40–78 (APPCLDGSPCANGGRCTHQQPSLEAACLCLPGWVGERCQ), 79–119 (LEDP…PDCS), and 120–157 (QPDPCVSRPCVHGAPCSVGPDGRFACACPPGYQGQSCQ). The Extracellular portion of the chain corresponds to 40-1643 (APPCLDGSPC…PLEAPEQSVP (1604 aa)). 99 disulfide bridges follow: Cys-43–Cys-55, Cys-49–Cys-66, Cys-68–Cys-77, Cys-83–Cys-94, Cys-88–Cys-107, Cys-109–Cys-118, Cys-124–Cys-135, Cys-129–Cys-145, Cys-147–Cys-156, Cys-163–Cys-175, Cys-169–Cys-184, Cys-186–Cys-195, Cys-202–Cys-213, Cys-207–Cys-223, Cys-225–Cys-234, Cys-241–Cys-252, Cys-246–Cys-261, Cys-263–Cys-272, Cys-279–Cys-292, Cys-286–Cys-301, Cys-303–Cys-312, Cys-319–Cys-330, Cys-324–Cys-339, Cys-341–Cys-350, Cys-356–Cys-367, Cys-361–Cys-378, Cys-380–Cys-389, Cys-396–Cys-409, Cys-403–Cys-418, Cys-420–Cys-429, Cys-436–Cys-447, Cys-441–Cys-456, Cys-458–Cys-467, Cys-474–Cys-485, Cys-479–Cys-494, Cys-496–Cys-505, Cys-512–Cys-523, Cys-517–Cys-532, Cys-534–Cys-543, Cys-550–Cys-560, Cys-555–Cys-569, Cys-571–Cys-580, Cys-587–Cys-598, Cys-592–Cys-607, Cys-609–Cys-618, Cys-625–Cys-635, Cys-630–Cys-644, Cys-646–Cys-655, Cys-662–Cys-673, Cys-667–Cys-682, Cys-684–Cys-693, Cys-700–Cys-710, Cys-705–Cys-719, Cys-721–Cys-730, Cys-739–Cys-750, Cys-744–Cys-759, Cys-761–Cys-770, Cys-776–Cys-787, Cys-781–Cys-797, Cys-799–Cys-808, Cys-815–Cys-827, Cys-821–Cys-836, Cys-838–Cys-847, Cys-854–Cys-865, Cys-859–Cys-874, Cys-876–Cys-885, Cys-892–Cys-902, Cys-897–Cys-911, Cys-913–Cys-922, Cys-929–Cys-940, Cys-934–Cys-949, Cys-951–Cys-960, Cys-967–Cys-978, Cys-972–Cys-987, Cys-989–Cys-998, Cys-1005–Cys-1016, Cys-1010–Cys-1023, Cys-1025–Cys-1034, Cys-1041–Cys-1062, Cys-1056–Cys-1071, Cys-1073–Cys-1082, Cys-1089–Cys-1100, Cys-1094–Cys-1109, Cys-1111–Cys-1120, Cys-1127–Cys-1138, Cys-1132–Cys-1147, Cys-1149–Cys-1158, Cys-1165–Cys-1183, Cys-1177–Cys-1192, Cys-1194–Cys-1203, Cys-1210–Cys-1223, Cys-1215–Cys-1233, Cys-1235–Cys-1244, Cys-1251–Cys-1262, Cys-1256–Cys-1276, Cys-1278–Cys-1287, Cys-1294–Cys-1305, Cys-1299–Cys-1314, and Cys-1316–Cys-1325. In terms of domain architecture, EGF-like 4; calcium-binding spans 159–196 (DIDECRSGTTCRHGGTCLNTPGSFRCQCPLGYTGLLCE). Positions 198–235 (PVVPCAPSPCRNGGTCRQSSDVTYDCACLPGFEGQNCE) constitute an EGF-like 5 domain. An EGF-like 6; calcium-binding domain is found at 237-273 (NVDDCPGHRCLNGGTCVDGVNTYNCQCPPEWTGQFCT). The region spanning 275–313 (DVDECQLQPNACHNGGTCFNLLGGHSCVCVNGWTGESCS) is the EGF-like 7 domain. Residues 315 to 351 (NIDDCATAVCFHGATCHDRVASFYCACPMGKTGLLCH) enclose the EGF-like 8; calcium-binding domain. Residues 352 to 390 (LDDACVSNPCHEDAICDTNPVSGRAICTCPPGFTGGACD) form the EGF-like 9 domain. The EGF-like 10; calcium-binding domain occupies 392–430 (DVDECSIGANPCEHLGRCVNTQGSFLCQCGRGYTGPRCE). The region spanning 432-468 (DVNECLSGPCRNQATCLDRIGQFTCICMAGFTGTYCE) is the EGF-like 11; calcium-binding domain. One can recognise an EGF-like 12; calcium-binding domain in the interval 470 to 506 (DIDECQSSPCVNGGVCKDRVNGFSCTCPSGFSGSMCQ). The EGF-like 13; calcium-binding domain occupies 508-544 (DVDECASTPCRNGAKCVDQPDGYECRCAEGFEGTLCE). The 36-residue stretch at 546 to 581 (NVDDCSPDPCHHGRCVDGIASFSCACAPGYTGIRCE) folds into the EGF-like 14; calcium-binding domain. In terms of domain architecture, EGF-like 15; calcium-binding spans 583 to 619 (QVDECRSQPCRYGGKCLDLVDKYLCRCPPGTTGVNCE). Residues 621-656 (NIDDCASNPCTFGVCRDGINRYDCVCQPGFTGPLCN) enclose the EGF-like 16; calcium-binding domain. An EGF-like 17; calcium-binding domain is found at 658–694 (EINECASSPCGEGGSCVDGENGFHCLCPPGSLPPLCL). 3 consecutive EGF-like domains span residues 696–731 (ANHPCAHKPCSHGVCHDAPGGFRCVCEPGWSGPRCS), 735–771 (APDACESQPCQAGGTCTSDGIGFRCTCAPGFQGHQCE), and 772–809 (VLSPCTPSLCEHGGHCESDPDRLTVCSCPPGWQGPRCQ). Residues 811–848 (DVDECAGASPCGPHGTCTNLPGNFRCICHRGYTGPFCD) form the EGF-like 21; calcium-binding domain. Residues 850-886 (DIDDCDPNPCLHGGSCQDGVGSFSCSCLDGFAGPRCA) form the EGF-like 22; calcium-binding domain. Residues 888–923 (DVDECLSSPCGPGTCTDHVASFTCACPPGYGGFHCE) enclose the EGF-like 23; calcium-binding domain. 5 consecutive EGF-like domains span residues 925 to 961 (DLPDCSPSSCFNGGTCVDGVSSFSCLCRPGYTGTHCQ), 963 to 999 (EADPCFSRPCLHGGICNPTHPGFECTCREGFTGSQCQ), 1001 to 1035 (PVDWCSQAPCQNGGRCVQTGAYCICPPGWSGRLCD), 1037 to 1083 (QSLP…SHCE), and 1085 to 1121 (EVDPCTAQPCQHGGTCRGYMGGYVCECPAGYAGDSCE). The region spanning 1123–1159 (NIDECASQPCQNGGSCIDLVARYLCSCPPGTLGVLCE) is the EGF-like 29; calcium-binding domain. The EGF-like 30; calcium-binding domain occupies 1161 to 1204 (NEDDCDLGPSLDSGVQCLHNGTCVDLVGGFRCNCPPGYTGLHCE). Asn-1180 carries an N-linked (GlcNAc...) asparagine glycan. EGF-like domains are found at residues 1206-1245 (DINECRPGACHAAHTRDCLQDPGGHFRCVCHPGFTGPRCQ), 1247-1288 (ALSP…LRCE), 1290-1326 (VARSCRELQCPVGIPCQQTARGPRCACPPGLSGPSCR), and 1336-1374 (TNASCASAPCLHGGSCLPVQSVPFFRCVCAPGWGGPRCE). The N-linked (GlcNAc...) asparagine glycan is linked to Asn-1337. Intrachain disulfides connect Cys-1340/Cys-1351, Cys-1345/Cys-1362, Cys-1364/Cys-1373, Cys-1388/Cys-1411, Cys-1393/Cys-1406, Cys-1402/Cys-1418, Cys-1429/Cys-1452, Cys-1434/Cys-1447, Cys-1443/Cys-1459, Cys-1468/Cys-1494, Cys-1476/Cys-1489, and Cys-1485/Cys-1501. 3 LNR repeats span residues 1388 to 1428 (CPRA…PWRQ), 1429 to 1466 (CEALQCWRLFNNSRCDPACSSPACLYDNFDCYSGGRDR), and 1468 to 1506 (CNPVYEKYCADHFADGRCDQGCNTEECGWDGLDCASEVP). Asn-1439 carries N-linked (GlcNAc...) asparagine glycosylation. Residues 1644 to 1664 (LLPLLVAGAVFLLIIFILGVM) traverse the membrane as a helical segment. The Cytoplasmic segment spans residues 1665–2318 (VARRKREHST…EVTPKRQVMA (654 aa)). 5 ANK repeats span residues 1839 to 1868 (TGETALHLAARYARADAAKRLLDAGADTNA), 1872 to 1902 (SGRTPLHTAVTADAQGVFQILIRNRSTDLDA), 1906 to 1935 (DGSTALILAARLAVEGMVEELIASHADVNA), 1939 to 1968 (LGKSALHWAAAVNNVEATLALLKNGANKDM), and 1972 to 2001 (KEETPLFLAAREGSYEAAKLLLDHLANREI). Disordered stretches follow at residues 2025–2045 (LDQPSGPRSPSGPHGLGPLLC) and 2058–2126 (QSGT…PLEG). Over residues 2028–2045 (PSGPRSPSGPHGLGPLLC) the composition is skewed to low complexity. Residue Arg-2174 is modified to Omega-N-methylarginine. Positions 2184–2193 (SFLLPLAPGP) are enriched in low complexity. The disordered stretch occupies residues 2184 to 2318 (SFLLPLAPGP…EVTPKRQVMA (135 aa)). Residues 2242-2261 (HPYLTPSPESPEHWASPSPP) form a PEST-like region. Over residues 2262 to 2282 (SLSDWSDSTPSPATATNATAS) the composition is skewed to low complexity. Residues 2296 to 2305 (SLPQSQTQLG) show a composition bias toward polar residues.

The protein belongs to the NOTCH family. As to quaternary structure, interacts with PSMA1. Heterodimer of a C-terminal fragment N(TM) and a N-terminal fragment N(EC) which are probably linked by disulfide bonds. Interacts with MAML1, MAML2 and MAML3 which act as transcriptional coactivators for NOTCH3. Interacts with HIF1AN. Post-translationally, synthesized in the endoplasmic reticulum as an inactive form which is proteolytically cleaved by a furin-like convertase in the trans-Golgi network before it reaches the plasma membrane to yield an active, ligand-accessible form. Cleavage results in a C-terminal fragment N(TM) and a N-terminal fragment N(EC). Following ligand binding, it is cleaved by TNF-alpha converting enzyme (TACE) to yield a membrane-associated intermediate fragment called notch extracellular truncation (NEXT). This fragment is then cleaved by presenilin dependent gamma-secretase to release a notch-derived peptide containing the intracellular domain (NICD) from the membrane. Phosphorylated. In terms of processing, hydroxylated by HIF1AN. In terms of tissue distribution, proliferating neuroepithelium.

The protein resides in the cell membrane. The protein localises to the nucleus. Its function is as follows. Functions as a receptor for membrane-bound ligands Jagged1, Jagged2 and Delta1 to regulate cell-fate determination. Upon ligand activation through the released notch intracellular domain (NICD) it forms a transcriptional activator complex with RBPJ/RBPSUH and activates genes of the enhancer of split locus. Affects the implementation of differentiation, proliferation and apoptotic programs. May play a role during CNS development. The chain is Neurogenic locus notch homolog protein 3 (Notch3) from Mus musculus (Mouse).